The primary structure comprises 364 residues: D-alanine--D-alanine ligase (364 aa).

The region spanning 134–347 (RRLACINGLK…YPDLLDELIN (214 aa)) is the ATP-grasp domain. 167 to 222 (ASEFGWPLFVKPCSLGSSVGIHKANNMDELNAAVADALRYDEEILVEEFIVGREIE) provides a ligand contact to ATP. Positions 300, 314, and 316 each coordinate Mg(2+).

Belongs to the D-alanine--D-alanine ligase family. Mg(2+) is required as a cofactor. It depends on Mn(2+) as a cofactor.

The protein localises to the cytoplasm. The enzyme catalyses 2 D-alanine + ATP = D-alanyl-D-alanine + ADP + phosphate + H(+). It participates in cell wall biogenesis; peptidoglycan biosynthesis. Cell wall formation. The sequence is that of D-alanine--D-alanine ligase from Legionella pneumophila (strain Lens).